The primary structure comprises 505 residues: uncharacterized protein (505 aa).

A disordered region spans residues 1–52; sequence MVDGSIHVPVQSHEGQHDNSSSLNEEIQTSQDPLGIVESYQESSTSDFDKSH. Polar residues predominate over residues 18–32; that stretch reads DNSSSLNEEIQTSQD. 10 helical membrane passes run 141–161, 173–193, 208–228, 235–255, 265–285, 290–310, 326–346, 362–382, 389–409, and 415–435; these read FWIV…TNTF, AFQT…YTVF, GWKY…VVLA, LSAS…SFIF, ILGV…DVIS, SAVN…CYGV, VVIG…TFIF, GYLA…PILF, FYNI…IHVF, and WLYP…HVFV. Residues serine 463, serine 466, and serine 467 each carry the phosphoserine modification.

This sequence belongs to the SLC35F solute transporter family.

The protein localises to the golgi apparatus membrane. This is an uncharacterized protein from Schizosaccharomyces pombe (strain 972 / ATCC 24843) (Fission yeast).